We begin with the raw amino-acid sequence, 45 residues long: Putative purine permease 9 (45 aa).

In terms of tissue distribution, not detected in seedlings, leaves, embryos or root and shoot meristems.

This chain is Putative purine permease 9, found in Arabidopsis thaliana (Mouse-ear cress).